Here is a 255-residue protein sequence, read N- to C-terminus: Probable transcriptional regulator ycf27 (255 aa).

Residues 9-122 form the Response regulatory domain; it reads KILIADDESS…ELEARIRCVL (114 aa). D58 is subject to 4-aspartylphosphate. A DNA-binding region (H-T-H motif) is located at residues 78-96; sequence DIPIIMLTALGDVTDRITG. The ompR/PhoB-type DNA-binding region spans 137-238; it reads SGIINIGFLK…SRGTGYLFQR (102 aa).

It is found in the plastid. It localises to the chloroplast. Probable promoter-specific protein mediating the interaction between DNA and RNA polymerase. The chain is Probable transcriptional regulator ycf27 (ycf27) from Galdieria sulphuraria (Red alga).